The primary structure comprises 410 residues: Regulator of microtubule dynamics protein 2 (410 aa).

A helical transmembrane segment spans residues 10-27 (IFGIMVGTAGISLLLLWY). Phosphoserine is present on serine 51. Residues 68–110 (FQERQLQILEKLNELLTNMEELKEEIRFLKETVPKLEEYIQDE) adopt a coiled-coil conformation. At serine 121 the chain carries Phosphoserine. Residues 122 to 131 (PQHRARKRRL) show a composition bias toward basic residues. The tract at residues 122–151 (PQHRARKRRLPTIQSSATSNSSEEAESEGG) is disordered. Residue threonine 139 is modified to Phosphothreonine. Tyrosine 152 carries the post-translational modification Phosphotyrosine. 2 positions are modified to phosphothreonine: threonine 154 and threonine 157.

The protein belongs to the RMDN family. As to quaternary structure, interacts with microtubules.

It is found in the membrane. Its subcellular location is the cytoplasm. The protein localises to the cytoskeleton. It localises to the spindle. The protein resides in the spindle pole. The chain is Regulator of microtubule dynamics protein 2 (RMDN2) from Macaca fascicularis (Crab-eating macaque).